A 236-amino-acid polypeptide reads, in one-letter code: Purine nucleoside phosphorylase DeoD-type (236 aa).

His-5 contacts a purine D-ribonucleoside. Residues Gly-21, Arg-25, Arg-44, and 88–91 contribute to the phosphate site; that span reads RVGT. A purine D-ribonucleoside is bound by residues 180–182 and 204–205; these read EME and SD. Asp-205 serves as the catalytic Proton donor.

Belongs to the PNP/UDP phosphorylase family. In terms of assembly, homohexamer; trimer of homodimers.

It carries out the reaction a purine D-ribonucleoside + phosphate = a purine nucleobase + alpha-D-ribose 1-phosphate. It catalyses the reaction a purine 2'-deoxy-D-ribonucleoside + phosphate = a purine nucleobase + 2-deoxy-alpha-D-ribose 1-phosphate. Functionally, catalyzes the reversible phosphorolytic breakdown of the N-glycosidic bond in the beta-(deoxy)ribonucleoside molecules, with the formation of the corresponding free purine bases and pentose-1-phosphate. This Shewanella baltica (strain OS155 / ATCC BAA-1091) protein is Purine nucleoside phosphorylase DeoD-type.